A 581-amino-acid polypeptide reads, in one-letter code: Metal transporter Nramp7.1 (581 aa).

Asn11 and Asn19 each carry an N-linked (GlcNAc...) asparagine glycan. The next 7 helical transmembrane spans lie at 57-77, 90-110, 146-166, 181-201, 224-244, 270-290, and 307-327; these read FLSYVGPGFLVSLAYLDPGNL, ELLWVILIGLIFALIIQSLAA, YCLWLLAEIAVIAADIPEGII, LLIGTAFALNILFHIPVWVGV, LLIAVLVFVMAACFFGEMSYV, IALLGALIMPHNLFLHSALVL, and YFLIESGFALFIAFLINLAVI. An N-linked (GlcNAc...) asparagine glycan is attached at Asn338. Transmembrane regions (helical) follow at residues 370–390, 409–429, 434–454, 473–493, and 513–533; these read IYAIALLASGQSSTITGTYAG, LVTRCIAIAPSLVVSIIGGSS, LIIIASVLQMILSFELPFALI, IYIIVISWILGLGIIGVNIYY, and VFIGIIVFPLMAIYILAVIYL. The tract at residues 551–581 is disordered; sequence PQQQANMENGLGPEMERVPYREDLADIPLPE. Residues 564 to 574 show a composition bias toward basic and acidic residues; sequence EMERVPYREDL.

This sequence belongs to the NRAMP (TC 2.A.55) family.

The protein resides in the membrane. Probable divalent metal transporter. The polypeptide is Metal transporter Nramp7.1 (Populus trichocarpa (Western balsam poplar)).